The following is a 222-amino-acid chain: Protein-L-isoaspartate O-methyltransferase (222 aa).

Ser-69 is an active-site residue.

The protein belongs to the methyltransferase superfamily. L-isoaspartyl/D-aspartyl protein methyltransferase family.

Its subcellular location is the cytoplasm. The enzyme catalyses [protein]-L-isoaspartate + S-adenosyl-L-methionine = [protein]-L-isoaspartate alpha-methyl ester + S-adenosyl-L-homocysteine. In terms of biological role, catalyzes the methyl esterification of L-isoaspartyl residues in peptides and proteins that result from spontaneous decomposition of normal L-aspartyl and L-asparaginyl residues. It plays a role in the repair and/or degradation of damaged proteins. In Nitrosomonas europaea (strain ATCC 19718 / CIP 103999 / KCTC 2705 / NBRC 14298), this protein is Protein-L-isoaspartate O-methyltransferase.